A 634-amino-acid chain; its full sequence is Chaperone protein HtpG (634 aa).

Positions 1 to 344 (MNETVANNKE…SNDLPLNVSR (344 aa)) are a; substrate-binding. The tract at residues 345–561 (EILQDNKVTQ…DFEMGTQMAK (217 aa)) is b. The tract at residues 562 to 634 (LLAAAGQAVP…TAINSLLTKG (73 aa)) is c.

The protein belongs to the heat shock protein 90 family. In terms of assembly, homodimer.

It localises to the cytoplasm. Functionally, molecular chaperone. Has ATPase activity. This chain is Chaperone protein HtpG, found in Vibrio vulnificus (strain CMCP6).